The primary structure comprises 132 residues: ATP synthase epsilon chain (132 aa).

Belongs to the ATPase epsilon chain family. F-type ATPases have 2 components, CF(1) - the catalytic core - and CF(0) - the membrane proton channel. CF(1) has five subunits: alpha(3), beta(3), gamma(1), delta(1), epsilon(1). CF(0) has three main subunits: a, b and c.

It localises to the cell inner membrane. In terms of biological role, produces ATP from ADP in the presence of a proton gradient across the membrane. This Cereibacter sphaeroides (strain ATCC 17025 / ATH 2.4.3) (Rhodobacter sphaeroides) protein is ATP synthase epsilon chain.